A 385-amino-acid chain; its full sequence is Glycine/sarcosine/betaine reductase complex component C subunit alpha (385 aa).

C359 is a catalytic residue.

As to quaternary structure, heterooctamer of four alpha and four beta subunits. Component of the glycine, sarcosine and betaine reductase complexes, together with proteins A and B.

It catalyses the reaction acetyl phosphate + [thioredoxin]-disulfide + NH4(+) + H2O = [thioredoxin]-dithiol + glycine + phosphate + H(+). It carries out the reaction acetyl phosphate + methylamine + [thioredoxin]-disulfide + H2O = sarcosine + [thioredoxin]-dithiol + phosphate + H(+). The catalysed reaction is acetyl phosphate + trimethylamine + [thioredoxin]-disulfide + H2O = glycine betaine + [thioredoxin]-dithiol + phosphate + H(+). In the first step of glycine, betaine and sarcosine reductases, the substrate is bound to component PB via a Schiff base intermediate. Then the PB-activated substrate is nucleophilically attacked by the selenol anion of component PA to transform it to a carboxymethylated selenoether and the respective amine. By action of component PC, acetyl phosphate is formed, leaving component PA in its oxidized state. Finally component PA becomes reduced by the thioredoxin system to start a new catalytic cycle of reductive deamination. In Peptoclostridium acidaminophilum (Eubacterium acidaminophilum), this protein is Glycine/sarcosine/betaine reductase complex component C subunit alpha (grdD).